A 246-amino-acid polypeptide reads, in one-letter code: Polyhedrin (246 aa).

It belongs to the polyhedrin family.

Its function is as follows. Major component of the virus occlusion bodies, which are large proteinaceous structures (polyhedra), that protect the virus from the outside environment for extended periods until they are ingested by insect larvae. The sequence is that of Polyhedrin (PH) from Lepidoptera (butterflies and moths).